The following is a 219-amino-acid chain: Ras-related protein Rab-32A (219 aa).

Gly-22–Thr-29 lines the GTP pocket. An Effector region motif is present at residues Tyr-44–Phe-52. GTP-binding positions include Asp-71–Gln-75 and Asn-134–Asp-137. The disordered stretch occupies residues Asn-192 to Lys-219. The span at Lys-206–Lys-219 shows a compositional bias: polar residues. 2 S-geranylgeranyl cysteine lipidation sites follow: Cys-217 and Cys-218.

The protein belongs to the small GTPase superfamily. Rab family.

The protein is Ras-related protein Rab-32A (rab32A) of Dictyostelium discoideum (Social amoeba).